A 528-amino-acid polypeptide reads, in one-letter code: Dihydromonacolin L monooxygenase LovA (528 aa).

Over 1 to 23 the chain is Cytoplasmic; the sequence is MTVDALTQPHHLLSLAWNDTQQH. A helical; Signal-anchor for type II membrane protein transmembrane segment spans residues 24 to 44; it reads GSWFAPLVTTSAGLLCLLLYL. Residues 45–528 are Lumenal-facing; the sequence is CSSGRRSELP…DEDIRLPGSL (484 aa). N-linked (GlcNAc...) asparagine glycosylation is present at Asn399. Position 465 (Cys465) interacts with heme.

It belongs to the cytochrome P450 family. Heme serves as cofactor.

Its subcellular location is the membrane. The protein resides in the endoplasmic reticulum membrane. The enzyme catalyses dihydromonacolin L carboxylate + reduced [NADPH--hemoprotein reductase] + O2 = monacolin L carboxylate + oxidized [NADPH--hemoprotein reductase] + 2 H2O + H(+). It catalyses the reaction monacolin L carboxylate + reduced [NADPH--hemoprotein reductase] + O2 = monacolin J carboxylate + oxidized [NADPH--hemoprotein reductase] + H2O + H(+). It participates in polyketide biosynthesis; lovastatin biosynthesis. Dihydromonacolin L monooxygenase; part of the gene cluster that mediates the biosynthesis of lovastatin (also known as mevinolin, mevacor or monacolin K), a hypolipidemic inhibitor of (3S)-hydroxymethylglutaryl-coenzyme A (HMG-CoA) reductase (HMGR). The first step in the biosynthesis of lovastatin is the production of dihydromonacolin L acid by the lovastatin nonaketide synthase lovB and the trans-acting enoyl reductase lovC via condensation of one acetyl-CoA unit and 8 malonyl-CoA units. Dihydromonacolin L acid is released from lovB by the thioesterase lovG. Next, dihydromonacolin L acid is oxidized by the dihydromonacolin L monooxygenase lovA twice to form monacolin J acid. The 2-methylbutyrate moiety of lovastatin is synthesized by the lovastatin diketide synthase lovF via condensation of one acetyl-CoA unit and one malonyl-CoA unit. Finally, the covalent attachment of this moiety to monacolin J acid is catalyzed by the transesterase lovD to yield lovastatin. LovD has broad substrate specificity and can also convert monacolin J to simvastatin using alpha-dimethylbutanoyl-S-methyl-3-mercaptopropionate (DMB-S-MMP) as the thioester acyl donor, and can also catalyze the reverse reaction and function as hydrolase in vitro. LovD has much higher activity with LovF-bound 2-methylbutanoate than with free diketide substrates. This is Dihydromonacolin L monooxygenase LovA from Aspergillus terreus (strain NIH 2624 / FGSC A1156).